Here is a 350-residue protein sequence, read N- to C-terminus: Biotin synthase (350 aa).

Residues 38-256 (NYVQVSTLLS…IAVARIMMPT (219 aa)) form the Radical SAM core domain. Cys53, Cys57, and Cys60 together coordinate [4Fe-4S] cluster. Cys97, Cys128, Cys188, and Arg260 together coordinate [2Fe-2S] cluster.

The protein belongs to the radical SAM superfamily. Biotin synthase family. In terms of assembly, homodimer. The cofactor is [4Fe-4S] cluster. Requires [2Fe-2S] cluster as cofactor.

It carries out the reaction (4R,5S)-dethiobiotin + (sulfur carrier)-SH + 2 reduced [2Fe-2S]-[ferredoxin] + 2 S-adenosyl-L-methionine = (sulfur carrier)-H + biotin + 2 5'-deoxyadenosine + 2 L-methionine + 2 oxidized [2Fe-2S]-[ferredoxin]. Its pathway is cofactor biosynthesis; biotin biosynthesis; biotin from 7,8-diaminononanoate: step 2/2. Its function is as follows. Catalyzes the conversion of dethiobiotin (DTB) to biotin by the insertion of a sulfur atom into dethiobiotin via a radical-based mechanism. This chain is Biotin synthase, found in Vibrio vulnificus (strain CMCP6).